Reading from the N-terminus, the 144-residue chain is Large ribosomal subunit protein uL13 (144 aa).

The protein belongs to the universal ribosomal protein uL13 family. Part of the 50S ribosomal subunit.

In terms of biological role, this protein is one of the early assembly proteins of the 50S ribosomal subunit, although it is not seen to bind rRNA by itself. It is important during the early stages of 50S assembly. The sequence is that of Large ribosomal subunit protein uL13 from Clostridium novyi (strain NT).